We begin with the raw amino-acid sequence, 93 residues long: Large ribosomal subunit protein uL23cz/uL23cy (93 aa).

This sequence belongs to the universal ribosomal protein uL23 family. In terms of assembly, part of the 50S ribosomal subunit.

Its subcellular location is the plastid. It localises to the chloroplast. Binds to 23S rRNA. This is Large ribosomal subunit protein uL23cz/uL23cy (rpl23-A) from Nandina domestica (Heavenly bamboo).